The following is a 551-amino-acid chain: MDIQSNVLTITSGSTPTDTSSNGQAAKSTKERIKRSDFPSDFVFGAATASYQVEGAWNEGGKGMSNWDYFTQSQPGGISDFSNGTIAIDHYNMFKDDVVVMKKLGLKAYRFSLSWPRILPGGRLCHGVSKEGVQFYNDLIDALLAADIEPYITIFHWDIPQCLQLEYGGFLHERVVKDFIEYSEICFWEFGDRVKYWITLNEPWSFTVQGYVAGAFPPNRGVTPKDTEETQKHARLHRGGGKLLAAFKYGNPGTEPYKVAHNLILCHAHAVDIYRTKYQESQGGKIGITNCISWNEPLTDSQEDKDAATRGNDFMLGWFVEPVVTGEYPESMIKYVGDRLPKFSEKEEKLVKGSYDFLGINYYTSTYTSDDPTKPTTDSYFTDSHTKTSHERNKVPIGAQAGSDWLYIVPWGIYRVMVDMKKRYNDPVIYITENGVDEVNDKSKTSTEALKDDIRIHYHQEHLYYLKLAMDQGVNVKGYFIWSLFDNFEWAAGFSVRFGVMYVDYANGRYTRLPKRSAVWWRNFLTKPTAVPLKNEPEKSEDRRKRLRGST.

Positions 1–27 (MDIQSNVLTITSGSTPTDTSSNGQAAK) are enriched in polar residues. Residues 1–33 (MDIQSNVLTITSGSTPTDTSSNGQAAKSTKERI) form a disordered region. Residues glutamine 52, histidine 156, 201 to 202 (NE), tyrosine 363, glutamate 433, tryptophan 482, 489 to 490 (EW), and phenylalanine 498 contribute to the a beta-D-glucoside site. Glutamate 202 serves as the catalytic Proton donor. The Nucleophile role is filled by glutamate 433. Residues 502–551 (YVDYANGRYTRLPKRSAVWWRNFLTKPTAVPLKNEPEKSEDRRKRLRGST) are required for the homomultimerization. Residues 532–551 (PLKNEPEKSEDRRKRLRGST) form a disordered region. Over residues 535–544 (NEPEKSEDRR) the composition is skewed to basic and acidic residues. A Nuclear localization signal motif is present at residues 542 to 550 (DRRKRLRGS).

It belongs to the glycosyl hydrolase 1 family. Homomultimer. Native form of the enzyme requires at least an octamer conformation. Expressed in expanding leaves and in young drupes, mostly in the developing seed coat tissues, the perisperm and the mesocarp. Also detected in shoot and root meristems, flower buds, developing ovaries and tapetal cells of the anther. Not detected in embryos or endosperm, or in leaf trichomes.

It localises to the nucleus. The enzyme catalyses oleuropein + H2O = oleuropein aglycone + D-glucose. Its function is as follows. Major beta-glucosidase activating oleuropein into a potent protein cross-linking agent. No activity with rutin, luteolin or p-nitrophenyl-beta-glucopyranoside as substrates. This chain is Oleuropein beta-glucosidase, found in Olea europaea (Common olive).